Consider the following 94-residue polypeptide: Protein SpdA (94 aa).

The chain crosses the membrane as a helical span at residues 41–68 (GPILLALVAAGGSVGVVMTLCLLLQTAA).

The protein localises to the cell membrane. Involved in plasmid transfer. This Streptomyces lividans protein is Protein SpdA (spdA).